A 127-amino-acid polypeptide reads, in one-letter code: Gamma-synuclein (127 aa).

Repeat copies occupy residues 20-30 (EKTKQGVTEAA) and 31-41 (EKTKEGVMYVG). The segment at 20–67 (EKTKQGVTEAAEKTKEGVMYVGAKTKENVVQSVTSVAEKTKEQANAVS) is 4 X 11 AA tandem repeats of [EGSA]-K-T-K-[EQ]-[GQ]-V-X(4). The stretch at 42–56 (AKTKENVVQSVTSVA) is one 3; approximate repeat. Copy 4 of the repeat occupies 57 to 67 (EKTKEQANAVS). Phosphoserine is present on residues Ser67 and Ser72. A disordered region spans residues 96 to 127 (RKEDLRPSAPQQEGEASKEKEEVAEEAQSGGD). Residue Ser124 is modified to Phosphoserine; by BARK1, CaMK2 and CK2.

It belongs to the synuclein family. May be a centrosome-associated protein. Interacts with MYOC; affects its secretion and its aggregation. Post-translationally, phosphorylated. Phosphorylation by GRK5 appears to occur on residues distinct from the residue phosphorylated by other kinases. Highly expressed in brain, particularly in the substantia nigra. Also expressed in the corpus callosum, heart, skeletal muscle, ovary, testis, colon and spleen. Weak expression in pancreas, kidney and lung.

Its subcellular location is the cytoplasm. It is found in the perinuclear region. It localises to the cytoskeleton. The protein localises to the microtubule organizing center. The protein resides in the centrosome. Its subcellular location is the spindle. Its function is as follows. Plays a role in neurofilament network integrity. May be involved in modulating axonal architecture during development and in the adult. In vitro, increases the susceptibility of neurofilament-H to calcium-dependent proteases. May also function in modulating the keratin network in skin. Activates the MAPK and Elk-1 signal transduction pathway. This Homo sapiens (Human) protein is Gamma-synuclein (SNCG).